We begin with the raw amino-acid sequence, 352 residues long: Protein RecA (352 aa).

67–74 (GPESSGKT) contacts ATP.

Belongs to the RecA family.

The protein resides in the cytoplasm. In terms of biological role, can catalyze the hydrolysis of ATP in the presence of single-stranded DNA, the ATP-dependent uptake of single-stranded DNA by duplex DNA, and the ATP-dependent hybridization of homologous single-stranded DNAs. It interacts with LexA causing its activation and leading to its autocatalytic cleavage. The protein is Protein RecA of Chlamydia trachomatis serovar D (strain ATCC VR-885 / DSM 19411 / UW-3/Cx).